A 394-amino-acid polypeptide reads, in one-letter code: Major outer membrane porin, serovar B (394 aa).

The first 22 residues, 1–22, serve as a signal peptide directing secretion; that stretch reads MKKLLKSVLVFAALSSASSLQA.

The protein belongs to the chlamydial porin (CP) (TC 1.B.2) family. In terms of assembly, part of a disulfide cross-linked outer membrane complex (COMC) composed of the major outer membrane porin (MOMP), the small cysteine-rich protein (OmcA) and the large cysteine-rich periplasmic protein (OmcB).

Its subcellular location is the cell outer membrane. Functionally, in elementary bodies (EBs, the infectious stage, which is able to survive outside the host cell) provides the structural integrity of the outer envelope through disulfide cross-links with the small cysteine-rich protein and the large cysteine-rich periplasmic protein. It has been described in publications as the Sarkosyl-insoluble COMC (Chlamydia outer membrane complex), and serves as the functional equivalent of peptidoglycan. Permits diffusion of specific solutes through the outer membrane. The sequence is that of Major outer membrane porin, serovar B (ompA) from Chlamydia trachomatis.